Reading from the N-terminus, the 455-residue chain is Golgi pH regulator (455 aa).

The next 5 helical transmembrane spans lie at 5-25 (IDSS…WLFF), 46-66 (VTFA…LGVL), 79-99 (LCVI…YFIV), 114-134 (CLLW…FPIL), and 150-170 (VGVI…VNCP). An N-linked (GlcNAc...) asparagine glycan is attached at asparagine 180. 4 helical membrane passes run 288-308 (FLGY…TINI), 343-363 (ISFI…LITL), 378-398 (VIVL…VLLI), and 425-445 (WFDV…YLAH).

This sequence belongs to the Golgi pH regulator (TC 1.A.38) family. In terms of assembly, homotrimer. Interacts with RABL3; the interaction stabilizes GPR89.

It is found in the golgi apparatus membrane. The catalysed reaction is iodide(out) = iodide(in). It carries out the reaction chloride(in) = chloride(out). The enzyme catalyses bromide(in) = bromide(out). It catalyses the reaction fluoride(in) = fluoride(out). In terms of biological role, voltage-gated channel that enables the transfer of monoatomic anions such as iodide, chloride, bromide and fluoride which may function in counter-ion conductance and participates in Golgi acidification. Plays a role in lymphocyte development, probably by acting as a RABL3 effector in hematopoietic cells. The protein is Golgi pH regulator of Mus musculus (Mouse).